A 92-amino-acid polypeptide reads, in one-letter code: Small ribosomal subunit protein uS19 (92 aa).

It belongs to the universal ribosomal protein uS19 family.

Its function is as follows. Protein S19 forms a complex with S13 that binds strongly to the 16S ribosomal RNA. The polypeptide is Small ribosomal subunit protein uS19 (Vibrio campbellii (strain ATCC BAA-1116)).